The sequence spans 145 residues: QFDQETMTLHHDKHHATYVANANAALEKHPEIGENLEELLANVESIPADIRQALINNGGGHLNHALFWELLSPEKTEVTKEVASAIDQAFGSFDAFKEQFAAAATGRFGSGWAWLVVTKEGSLEITSTANQDTPISEGKKPILAL.

2 residues coordinate Fe(3+): His10 and His64. Mn(2+) contacts are provided by His10 and His64.

The protein belongs to the iron/manganese superoxide dismutase family. It depends on Mn(2+) as a cofactor. Fe(3+) is required as a cofactor.

The enzyme catalyses 2 superoxide + 2 H(+) = H2O2 + O2. Its function is as follows. Destroys superoxide anion radicals which are normally produced within the cells and which are toxic to biological systems. Catalyzes the dismutation of superoxide anion radicals into O2 and H2O2 by successive reduction and oxidation of the transition metal ion at the active site. This is Superoxide dismutase [Mn/Fe] (sodA) from Streptococcus iniae (Streptococcus shiloi).